Reading from the N-terminus, the 469-residue chain is Phenylalanine--tRNA ligase, mitochondrial (469 aa).

A mitochondrion-targeting transit peptide spans 1–17 (MFLNRMMKTRTGLYRLY). Residues 126-129 (SAHE), Arg155, 162-164 (THY), 169-171 (QME), Glu302, and Phe329 each bind substrate. One can recognise an FDX-ACB domain in the interval 372–469 (SKHPGSFRDV…LVKEYSVELR (98 aa)).

The protein belongs to the class-II aminoacyl-tRNA synthetase family. As to quaternary structure, monomer.

It is found in the mitochondrion matrix. The catalysed reaction is tRNA(Phe) + L-phenylalanine + ATP = L-phenylalanyl-tRNA(Phe) + AMP + diphosphate + H(+). In terms of biological role, is responsible for the charging of tRNA(Phe) with phenylalanine in mitochondrial translation. The sequence is that of Phenylalanine--tRNA ligase, mitochondrial (MSF1) from Saccharomyces cerevisiae (strain ATCC 204508 / S288c) (Baker's yeast).